The following is a 278-amino-acid chain: Biotin synthase (278 aa).

The region spanning 1 to 227 (MQIMLCAISN…QSVVMVAGGR (227 aa)) is the Radical SAM core domain. Residues cysteine 16, cysteine 20, and cysteine 23 each contribute to the [4Fe-4S] cluster site. 3 residues coordinate [2Fe-2S] cluster: cysteine 60, cysteine 95, and cysteine 153.

Belongs to the radical SAM superfamily. Biotin synthase family. Homodimer. The cofactor is [4Fe-4S] cluster. [2Fe-2S] cluster is required as a cofactor.

It carries out the reaction (4R,5S)-dethiobiotin + (sulfur carrier)-SH + 2 reduced [2Fe-2S]-[ferredoxin] + 2 S-adenosyl-L-methionine = (sulfur carrier)-H + biotin + 2 5'-deoxyadenosine + 2 L-methionine + 2 oxidized [2Fe-2S]-[ferredoxin]. It functions in the pathway cofactor biosynthesis; biotin biosynthesis; biotin from 7,8-diaminononanoate: step 2/2. Its function is as follows. Catalyzes the conversion of dethiobiotin (DTB) to biotin by the insertion of a sulfur atom into dethiobiotin via a radical-based mechanism. This Campylobacter jejuni subsp. jejuni serotype O:23/36 (strain 81-176) protein is Biotin synthase.